We begin with the raw amino-acid sequence, 131 residues long: Small ribosomal subunit protein uS8 (131 aa).

Belongs to the universal ribosomal protein uS8 family. In terms of assembly, part of the 30S ribosomal subunit. Contacts proteins S5 and S12.

In terms of biological role, one of the primary rRNA binding proteins, it binds directly to 16S rRNA central domain where it helps coordinate assembly of the platform of the 30S subunit. This chain is Small ribosomal subunit protein uS8, found in Sulfurimonas denitrificans (strain ATCC 33889 / DSM 1251) (Thiomicrospira denitrificans (strain ATCC 33889 / DSM 1251)).